Consider the following 303-residue polypeptide: Deoxyhypusine hydroxylase (303 aa).

HEAT-like PBS-type repeat units lie at residues 56–82 (LKHE…VLQD) and 89–115 (VRHE…YAQD). Fe cation is bound by residues histidine 58, histidine 91, and glutamate 92. Positions 139–158 (DSPDTNPYLSVDPAPPAEEK) are disordered. HEAT-like PBS-type repeat units lie at residues 176-202 (HRYR…GLQI), 207-233 (FRHE…ALER), and 240-266 (VRHE…HVGD). Positions 209, 242, and 243 each coordinate Fe cation.

This sequence belongs to the deoxyhypusine hydroxylase family. The cofactor is Fe(2+).

It carries out the reaction [eIF5A protein]-deoxyhypusine + AH2 + O2 = [eIF5A protein]-hypusine + A + H2O. The protein operates within protein modification; eIF5A hypusination. Catalyzes the hydroxylation of the N(6)-(4-aminobutyl)-L-lysine intermediate produced by deoxyhypusine synthase/DHPS on a critical lysine of the eukaryotic translation initiation factor 5A/eIF-5A. This is the second step of the post-translational modification of that lysine into an unusual amino acid residue named hypusine. Hypusination is unique to mature eIF-5A factor and is essential for its function. This Xenopus laevis (African clawed frog) protein is Deoxyhypusine hydroxylase (dohh).